The sequence spans 74 residues: Apolipoprotein C-I, acidic form (74 aa).

The signal sequence occupies residues 1-26 (MRLFLSLPVLVVVLSMVLEGPTPAQG).

The protein belongs to the apolipoprotein C1 family.

Its subcellular location is the secreted. The polypeptide is Apolipoprotein C-I, acidic form (APOC1A) (Colobus guereza (Mantled guereza)).